The following is a 530-amino-acid chain: uncharacterized protein (530 aa).

This is an uncharacterized protein from Leptospira interrogans serogroup Icterohaemorrhagiae serovar Lai (strain 56601).